A 230-amino-acid chain; its full sequence is Proteasome subunit alpha (230 aa).

This sequence belongs to the peptidase T1A family. The 20S proteasome core is composed of 14 alpha and 14 beta subunits that assemble into four stacked heptameric rings, resulting in a barrel-shaped structure. The two inner rings, each composed of seven catalytic beta subunits, are sandwiched by two outer rings, each composed of seven alpha subunits. The catalytic chamber with the active sites is on the inside of the barrel. Has a gated structure, the ends of the cylinder being occluded by the N-termini of the alpha-subunits. Is capped by the proteasome-associated ATPase, ARC.

The protein localises to the cytoplasm. It functions in the pathway protein degradation; proteasomal Pup-dependent pathway. The formation of the proteasomal ATPase ARC-20S proteasome complex, likely via the docking of the C-termini of ARC into the intersubunit pockets in the alpha-rings, may trigger opening of the gate for substrate entry. Interconversion between the open-gate and close-gate conformations leads to a dynamic regulation of the 20S proteasome proteolysis activity. In terms of biological role, component of the proteasome core, a large protease complex with broad specificity involved in protein degradation. The protein is Proteasome subunit alpha of Thermomonospora curvata (strain ATCC 19995 / DSM 43183 / JCM 3096 / KCTC 9072 / NBRC 15933 / NCIMB 10081 / Henssen B9).